We begin with the raw amino-acid sequence, 24 residues long: Humanin (24 aa).

Residues 1–12 are sufficient to interact with BID and BIM and to suppress BID and BIM activity; that stretch reads MAPRGFSCLLLL. The tract at residues 3-19 is sufficient for neuroprotective activity; it reads PRGFSCLLLLTSEIDLP. Positions 5 to 12 are sufficient to interact with MPP8; it reads GFSCLLLL. Required for secretion regions lie at residues 9-11 and 19-20; these read LLL and PV.

In terms of assembly, homodimer. Interacts with amyloid-beta protein 42 (Abeta42); the interaction prevents Abeta42 fibril formation. Interacts with BAX; forms fibers with BAX which results in BAX conformational changes and sequestering of BAX into the fibers, preventing BAX activation. Interacts with both full-length BID and cleaved BID p15; forms fibers with BID which results in BID conformational changes and sequestering of BID into the fibers, preventing BID activation. Interacts with BIM isoform BimEL but not with BIM isoforms BimL or BimS; the interaction prevents BIM-induced apoptosis. Interacts with IGFBP3; competes with importin KPNB1 for binding to IGFBP3, blocking IGFBP3 nuclear import. Interacts with TRIM11. Interacts with MPP8. As to expression, expressed in testis, seminal plasma and sperm (at protein level). Higher seminal plasma levels are associated with normospermia than with oligospermia, asthenospermia or oligoasthenospermia (at protein level). Higher sperm levels are associated with normospermia than with asthenospermia (at protein level). Expressed in retinal epithelial cells (at protein level). Expressed in the heart, skeletal muscle, kidney and liver. Lesser but significant expression is observed in the brain and the gastrointestinal tract. Expressed in the AD brain, where it is found in some of the large intact neurons of the occipital lobes and small and round reactive glial cells in the hippocampus.

Its subcellular location is the secreted. It is found in the cytoplasm. It localises to the cell projection. The protein resides in the cilium. The protein localises to the flagellum. Its subcellular location is the nucleus. It is found in the mitochondrion. Its function is as follows. Plays a role as a neuroprotective factor. Protects against neuronal cell death induced by multiple different familial Alzheimer disease genes and amyloid-beta proteins in Alzheimer disease. Mediates its neuroprotective effect by interacting with a receptor complex composed of IL6ST/GP130, IL27RA/WSX1 and CNTFR. Also acts as a ligand for G-protein coupled receptors FPR2/FPRL1 and FPR3/FPRL2. Inhibits amyloid-beta protein 40 fibril formation. Also inhibits amyloid-beta protein 42 fibril formation. Suppresses apoptosis by binding to BAX and preventing the translocation of BAX from the cytosol to mitochondria. Also suppresses apoptosis by binding to BID and inhibiting the interaction of BID with BAX and BAK which prevents oligomerization of BAX and BAK and suppresses release of apoptogenic proteins from mitochondria. Forms fibers with BAX and also with BID, inducing BAX and BID conformational changes and sequestering them into the fibers which prevents their activation. Can also suppress apoptosis by interacting with BIM isoform BimEL, inhibiting BimEL-induced activation of BAX, blocking oligomerization of BAX and BAK, and preventing release of apoptogenic proteins from mitochondria. Plays a role in up-regulation of anti-apoptotic protein BIRC6/APOLLON, leading to inhibition of neuronal cell death. Binds to IGFBP3 and specifically blocks IGFBP3-induced cell death. Competes with importin KPNB1 for binding to IGFBP3 which is likely to block IGFBP3 nuclear import. Induces chemotaxis of mononuclear phagocytes via FPR2/FPRL1. Reduces aggregation and fibrillary formation by suppressing the effect of APP on mononuclear phagocytes and acts by competitively inhibiting the access of FPR2 to APP. Protects retinal pigment epithelium (RPE) cells against oxidative stress-induced and endoplasmic reticulum (ER) stress-induced apoptosis. Promotes mitochondrial biogenesis in RPE cells following oxidative stress and promotes STAT3 phosphorylation which leads to inhibition of CASP3 release. Also reduces CASP4 levels in RPE cells, suppresses ER stress-induced mitochondrial superoxide production and plays a role in up-regulation of mitochondrial glutathione. Reduces testicular hormone deprivation-induced apoptosis of germ cells at the nonandrogen-sensitive stages of the seminiferous epithelium cycle. Protects endothelial cells against free fatty acid-induced inflammation by suppressing oxidative stress, reducing expression of TXNIP and inhibiting activation of the NLRP3 inflammasome which inhibits expression of pro-inflammatory cytokines IL1B and IL18. Protects against high glucose-induced endothelial cell dysfunction by mediating activation of ERK5 which leads to increased expression of transcription factor KLF2 and prevents monocyte adhesion to endothelial cells. Inhibits the inflammatory response in astrocytes. Increases the expression of PPARGC1A/PGC1A in pancreatic beta cells which promotes mitochondrial biogenesis. Increases insulin sensitivity. The protein is Humanin of Homo sapiens (Human).